Here is a 247-residue protein sequence, read N- to C-terminus: Phosphatidylserine decarboxylase proenzyme (247 aa).

Residue S206 is the Schiff-base intermediate with substrate; via pyruvic acid of the active site. Pyruvic acid (Ser); by autocatalysis is present on S206.

Belongs to the phosphatidylserine decarboxylase family. PSD-A subfamily. As to quaternary structure, heterodimer of a large membrane-associated beta subunit and a small pyruvoyl-containing alpha subunit. It depends on pyruvate as a cofactor. In terms of processing, is synthesized initially as an inactive proenzyme. Formation of the active enzyme involves a self-maturation process in which the active site pyruvoyl group is generated from an internal serine residue via an autocatalytic post-translational modification. Two non-identical subunits are generated from the proenzyme in this reaction, and the pyruvate is formed at the N-terminus of the alpha chain, which is derived from the carboxyl end of the proenzyme. The post-translation cleavage follows an unusual pathway, termed non-hydrolytic serinolysis, in which the side chain hydroxyl group of the serine supplies its oxygen atom to form the C-terminus of the beta chain, while the remainder of the serine residue undergoes an oxidative deamination to produce ammonia and the pyruvoyl prosthetic group on the alpha chain.

It localises to the cell membrane. It catalyses the reaction a 1,2-diacyl-sn-glycero-3-phospho-L-serine + H(+) = a 1,2-diacyl-sn-glycero-3-phosphoethanolamine + CO2. It participates in phospholipid metabolism; phosphatidylethanolamine biosynthesis; phosphatidylethanolamine from CDP-diacylglycerol: step 2/2. Catalyzes the formation of phosphatidylethanolamine (PtdEtn) from phosphatidylserine (PtdSer). In Nitrobacter winogradskyi (strain ATCC 25391 / DSM 10237 / CIP 104748 / NCIMB 11846 / Nb-255), this protein is Phosphatidylserine decarboxylase proenzyme.